The chain runs to 81 residues: Sulfur carrier protein TusA (81 aa).

Catalysis depends on C19, which acts as the Cysteine persulfide intermediate.

Belongs to the sulfur carrier protein TusA family.

The protein localises to the cytoplasm. Its function is as follows. Sulfur carrier protein which probably makes part of a sulfur-relay system. In Shewanella denitrificans (strain OS217 / ATCC BAA-1090 / DSM 15013), this protein is Sulfur carrier protein TusA.